Reading from the N-terminus, the 327-residue chain is MKPLMLQGHQRAITQIKYNREGDLIFSSAKDSKPSVWYSLNGERLGTFNGHIGAVWCVDVDWTTTRLITGAGDMNTFLWDVETGTALGKIPCNSSVRTCNFSFSGNQASYSTDRAMNHPCELFVIDVRNIDASISSADPVLKLTMNEQQSKITSMLWGALDETVITGHENGSLRIWDLRAVKELNSVNDHTASITDMQMSSDGTMFVSSSKDCSAKLFDSDSLMCLKTFKTERPVNSACISPLFEHVALGGGQDAMEVTTTSTQAGKFDSRFFHLVYEEEFARVKGHFGPINSMAFHPDGKSFATGGEDGFVRLQVFDSSYYEHTFE.

5 WD repeats span residues 8–47 (GHQR…RLGT), 50–89 (GHIG…ALGK), 147–186 (EQQS…ELNS), 189–228 (DHTA…CLKT), and 286–327 (GHFG…HTFE).

It belongs to the eIF-3 subunit I family. As to quaternary structure, component of the eukaryotic translation initiation factor 3 (eIF-3) complex.

It localises to the cytoplasm. Component of the eukaryotic translation initiation factor 3 (eIF-3) complex, which is involved in protein synthesis of a specialized repertoire of mRNAs and, together with other initiation factors, stimulates binding of mRNA and methionyl-tRNAi to the 40S ribosome. The eIF-3 complex specifically targets and initiates translation of a subset of mRNAs involved in cell proliferation. The polypeptide is Eukaryotic translation initiation factor 3 subunit I (Anopheles gambiae (African malaria mosquito)).